The sequence spans 281 residues: uncharacterized protein (281 aa).

8 helical membrane-spanning segments follow: residues 30–50, 54–74, 76–96, 106–126, 153–173, 198–218, 235–255, and 259–279; these read AIVA…FIVI, VFIS…GYYF, FNPL…MGWV, TLIG…IDLT, AGLD…FLAI, IALT…IALL, MMAV…ALSY, and LSSG…SLAF.

The protein belongs to the ABC-3 integral membrane protein family.

The protein localises to the cell membrane. This is an uncharacterized protein from Synechocystis sp. (strain ATCC 27184 / PCC 6803 / Kazusa).